The primary structure comprises 253 residues: MEKLLIVNADDFGLSKGQNYGVIEAYQHGVVSSTTAMVNGGGAQHAAALSRQYPGLPIGLHFVLTHGKPLGAMPSLVNEHGELGKWLWRRAEAGELSLDEIHEELQRQFARFVTLFGRPPTHIDSHHHVHMQPQIYPLVEAFAQAQGLPLRLDREEAKRRELALQTPCSTDAFDAGFYGEMISEALFLQRLARADEQGAESLEMMCHPAFLDATILQSKYCHPRLVELDVLTAPTLKAAIAERGFLLGSFQDL.

His61 and His126 together coordinate Mg(2+).

Belongs to the YdjC deacetylase family. ChbG subfamily. Homodimer. Mg(2+) serves as cofactor.

It is found in the cytoplasm. It catalyses the reaction N,N'-diacetylchitobiose + H2O = N-acetyl-beta-D-glucosaminyl-(1-&gt;4)-D-glucosamine + acetate. The enzyme catalyses diacetylchitobiose-6'-phosphate + H2O = N'-monoacetylchitobiose-6'-phosphate + acetate. It participates in glycan degradation; chitin degradation. Functionally, involved in the degradation of chitin. ChbG is essential for growth on the acetylated chitooligosaccharides chitobiose and chitotriose but is dispensable for growth on cellobiose and chitosan dimer, the deacetylated form of chitobiose. Deacetylation of chitobiose-6-P and chitotriose-6-P is necessary for both the activation of the chb promoter by the regulatory protein ChbR and the hydrolysis of phosphorylated beta-glucosides by the phospho-beta-glucosidase ChbF. Catalyzes the removal of only one acetyl group from chitobiose-6-P to yield monoacetylchitobiose-6-P, the inducer of ChbR and the substrate of ChbF. The chain is Chitooligosaccharide deacetylase from Serratia marcescens.